Consider the following 524-residue polypeptide: Bifunctional purine biosynthesis protein PurH (524 aa).

The region spanning 1–145 (MIKQALLSVS…KNHRDVTVIV (145 aa)) is the MGS-like domain.

The protein belongs to the PurH family.

The enzyme catalyses (6R)-10-formyltetrahydrofolate + 5-amino-1-(5-phospho-beta-D-ribosyl)imidazole-4-carboxamide = 5-formamido-1-(5-phospho-D-ribosyl)imidazole-4-carboxamide + (6S)-5,6,7,8-tetrahydrofolate. The catalysed reaction is IMP + H2O = 5-formamido-1-(5-phospho-D-ribosyl)imidazole-4-carboxamide. Its pathway is purine metabolism; IMP biosynthesis via de novo pathway; 5-formamido-1-(5-phospho-D-ribosyl)imidazole-4-carboxamide from 5-amino-1-(5-phospho-D-ribosyl)imidazole-4-carboxamide (10-formyl THF route): step 1/1. The protein operates within purine metabolism; IMP biosynthesis via de novo pathway; IMP from 5-formamido-1-(5-phospho-D-ribosyl)imidazole-4-carboxamide: step 1/1. The protein is Bifunctional purine biosynthesis protein PurH of Cupriavidus necator (strain ATCC 17699 / DSM 428 / KCTC 22496 / NCIMB 10442 / H16 / Stanier 337) (Ralstonia eutropha).